The following is a 222-amino-acid chain: MTETLPTPVLDTAQARVLGCLIEKEATTPDAYPLTVNAAQVAANQKTAREPVLTLQTGKVHHALRQLETLGLVRQQFSSRAERYEHRLGSALDLTRQQVAVIGLLLLRGPQTLGELFARSERLARFNDSDDVRHHLERLIQRGLAVQLPRASGQREDRYAHLLSGELDLDALQAAAARAAPSARSGADSSELEARVLSLETTVAELQDALSALQARLDAAGA.

It belongs to the UPF0502 family.

This is UPF0502 protein XCC4136 from Xanthomonas campestris pv. campestris (strain ATCC 33913 / DSM 3586 / NCPPB 528 / LMG 568 / P 25).